Reading from the N-terminus, the 338-residue chain is 4-hydroxythreonine-4-phosphate dehydrogenase (338 aa).

2 residues coordinate substrate: histidine 140 and threonine 141. A divalent metal cation is bound by residues histidine 172, histidine 217, and histidine 271. The substrate site is built by lysine 279, asparagine 288, and arginine 297.

This sequence belongs to the PdxA family. As to quaternary structure, homodimer. A divalent metal cation is required as a cofactor.

Its subcellular location is the cytoplasm. It catalyses the reaction 4-(phosphooxy)-L-threonine + NAD(+) = 3-amino-2-oxopropyl phosphate + CO2 + NADH. It participates in cofactor biosynthesis; pyridoxine 5'-phosphate biosynthesis; pyridoxine 5'-phosphate from D-erythrose 4-phosphate: step 4/5. Its function is as follows. Catalyzes the NAD(P)-dependent oxidation of 4-(phosphooxy)-L-threonine (HTP) into 2-amino-3-oxo-4-(phosphooxy)butyric acid which spontaneously decarboxylates to form 3-amino-2-oxopropyl phosphate (AHAP). The sequence is that of 4-hydroxythreonine-4-phosphate dehydrogenase from Prosthecochloris aestuarii (strain DSM 271 / SK 413).